The sequence spans 353 residues: Holliday junction branch migration complex subunit RuvB (353 aa).

Residues 1–182 (MPERLITPKG…FGIVQRLEFY (182 aa)) form a large ATPase domain (RuvB-L) region. ATP contacts are provided by residues I21, R22, G63, K66, T67, T68, 129–131 (EDF), R172, Y182, and R219. Residue T67 participates in Mg(2+) binding. A small ATPAse domain (RuvB-S) region spans residues 183 to 253 (NVQDLTRIVQ…VADRALDLLD (71 aa)). The segment at 256 to 353 (VQGFDAQDRR…QEEGGGEGKL (98 aa)) is head domain (RuvB-H). R292, R311, and R316 together coordinate DNA.

The protein belongs to the RuvB family. Homohexamer. Forms an RuvA(8)-RuvB(12)-Holliday junction (HJ) complex. HJ DNA is sandwiched between 2 RuvA tetramers; dsDNA enters through RuvA and exits via RuvB. An RuvB hexamer assembles on each DNA strand where it exits the tetramer. Each RuvB hexamer is contacted by two RuvA subunits (via domain III) on 2 adjacent RuvB subunits; this complex drives branch migration. In the full resolvosome a probable DNA-RuvA(4)-RuvB(12)-RuvC(2) complex forms which resolves the HJ.

The protein localises to the cytoplasm. The catalysed reaction is ATP + H2O = ADP + phosphate + H(+). In terms of biological role, the RuvA-RuvB-RuvC complex processes Holliday junction (HJ) DNA during genetic recombination and DNA repair, while the RuvA-RuvB complex plays an important role in the rescue of blocked DNA replication forks via replication fork reversal (RFR). RuvA specifically binds to HJ cruciform DNA, conferring on it an open structure. The RuvB hexamer acts as an ATP-dependent pump, pulling dsDNA into and through the RuvAB complex. RuvB forms 2 homohexamers on either side of HJ DNA bound by 1 or 2 RuvA tetramers; 4 subunits per hexamer contact DNA at a time. Coordinated motions by a converter formed by DNA-disengaged RuvB subunits stimulates ATP hydrolysis and nucleotide exchange. Immobilization of the converter enables RuvB to convert the ATP-contained energy into a lever motion, pulling 2 nucleotides of DNA out of the RuvA tetramer per ATP hydrolyzed, thus driving DNA branch migration. The RuvB motors rotate together with the DNA substrate, which together with the progressing nucleotide cycle form the mechanistic basis for DNA recombination by continuous HJ branch migration. Branch migration allows RuvC to scan DNA until it finds its consensus sequence, where it cleaves and resolves cruciform DNA. This is Holliday junction branch migration complex subunit RuvB from Thioalkalivibrio sulfidiphilus (strain HL-EbGR7).